The sequence spans 1409 residues: Inositol hexakisphosphate and diphosphoinositol-pentakisphosphate kinase 1 (1409 aa).

64-65 (KK) lines the substrate pocket. ATP-binding positions include Arg145, Lys198, His205, Arg224, 248–251 (EEFM), and 257–259 (DVK). 224-225 (RK) is a substrate binding site. The substrate site is built by Lys259 and Arg273. Residues Ser275, Asp320, and 332-334 (DVN) contribute to the ATP site. Residue 337 to 340 (SFVK) participates in substrate binding. Residues 382–453 (PTTSGTMMEL…VLDITRLLLA (72 aa)) are polyphosphoinositide-binding domain. Positions 891 to 996 (GVEEEGSAPA…PTEMKQSGLG (106 aa)) are disordered. Phosphoserine is present on residues Ser920 and Ser963. Residues 981–996 (FSSSRPPTEMKQSGLG) show a composition bias toward polar residues. 2 positions are modified to phosphoserine: Ser1013 and Ser1049. A compositionally biased stretch (polar residues) spans 1110–1119 (MHSSQASDNP). A disordered region spans residues 1110–1183 (MHSSQASDNP…PSLNSHVAEE (74 aa)). A phosphoserine mark is found at Ser1121 and Ser1128. Residues 1144 to 1162 (SSGPSSTVSSAGPSSPTTV) show a composition bias toward low complexity. Polar residues predominate over residues 1163–1178 (DGNSQFGFSDQPSLNS).

The protein belongs to the histidine acid phosphatase family. VIP1 subfamily.

The protein localises to the cytoplasm. It is found in the cytosol. Its subcellular location is the cell membrane. The catalysed reaction is 1D-myo-inositol hexakisphosphate + ATP = 1-diphospho-1D-myo-inositol 2,3,4,5,6-pentakisphosphate + ADP. It catalyses the reaction 5-diphospho-1D-myo-inositol 1,2,3,4,6-pentakisphosphate + ATP + H(+) = 1,5-bis(diphospho)-1D-myo-inositol 2,3,4,6-tetrakisphosphate + ADP. Its function is as follows. Bifunctional inositol kinase that acts in concert with the IP6K kinases IP6K1, IP6K2 and IP6K3 to synthesize the diphosphate group-containing inositol pyrophosphates diphosphoinositol pentakisphosphate, PP-InsP5, and bis-diphosphoinositol tetrakisphosphate, (PP)2-InsP4. PP-InsP5 and (PP)2-InsP4, also respectively called InsP7 and InsP8, regulate a variety of cellular processes, including apoptosis, vesicle trafficking, cytoskeletal dynamics, exocytosis, insulin signaling and neutrophil activation. Phosphorylates inositol hexakisphosphate (InsP6) at position 1 to produce PP-InsP5 which is in turn phosphorylated by IP6Ks to produce (PP)2-InsP4. Alternatively, phosphorylates PP-InsP5 at position 1, produced by IP6Ks from InsP6, to produce (PP)2-InsP4. Activated when cells are exposed to hyperosmotic stress. This is Inositol hexakisphosphate and diphosphoinositol-pentakisphosphate kinase 1 from Pongo abelii (Sumatran orangutan).